A 117-amino-acid polypeptide reads, in one-letter code: Large ribosomal subunit protein bL17 (117 aa).

Belongs to the bacterial ribosomal protein bL17 family. In terms of assembly, part of the 50S ribosomal subunit. Contacts protein L32.

This is Large ribosomal subunit protein bL17 from Neorickettsia sennetsu (strain ATCC VR-367 / Miyayama) (Ehrlichia sennetsu).